The following is a 476-amino-acid chain: DnaJ homolog subfamily C member 7 homolog (476 aa).

Positions 1–22 are disordered; that stretch reads MTEVETTHMNAGTESQQEPAEL. Residues 7–18 show a composition bias toward polar residues; it reads THMNAGTESQQE. 7 TPR repeats span residues 23–56, 59–92, 143–176, 177–210, 223–256, 261–294, and 295–328; these read AEKQ…GSDS, AIYY…KPDV, MSWM…NPKN, VEAL…DPDC, LENT…DPDN, AKLY…DSSY, and LKGL…DASD. One can recognise a J domain in the interval 349-414; it reads DHYKILGVSK…ESRRRFDSGV (66 aa).

Its subcellular location is the cytoplasm. The sequence is that of DnaJ homolog subfamily C member 7 homolog from Schizosaccharomyces pombe (strain 972 / ATCC 24843) (Fission yeast).